The following is a 108-amino-acid chain: ATP synthase epsilon chain (108 aa).

It belongs to the ATPase epsilon chain family. As to quaternary structure, F-type ATPases have 2 components, CF(1) - the catalytic core - and CF(0) - the membrane proton channel. CF(1) has five subunits: alpha(3), beta(3), gamma(1), delta(1), epsilon(1). CF(0) has three main subunits: a, b and c.

It localises to the cell inner membrane. Its function is as follows. Produces ATP from ADP in the presence of a proton gradient across the membrane. The protein is ATP synthase epsilon chain of Rickettsia bellii (strain OSU 85-389).